Reading from the N-terminus, the 249-residue chain is ATP synthase subunit a (249 aa).

6 consecutive transmembrane segments (helical) span residues 30 to 50 (SLYMLLAVGAVALLMLGGSAG), 84 to 104 (FFPLVFSIFMFVLMANLIGVI), 114 to 134 (LIVTVALALIVFLTVLLYGLY), 143 to 163 (VFVPSGVPIYILPLIAMIEVI), 193 to 213 (FVTSLGALGVAGIAGAALPLA), and 220 to 240 (ILEVLVALLQAYVFAILTCIY).

Belongs to the ATPase A chain family. As to quaternary structure, F-type ATPases have 2 components, CF(1) - the catalytic core - and CF(0) - the membrane proton channel. CF(1) has five subunits: alpha(3), beta(3), gamma(1), delta(1), epsilon(1). CF(0) has three main subunits: a(1), b(2) and c(9-12). The alpha and beta chains form an alternating ring which encloses part of the gamma chain. CF(1) is attached to CF(0) by a central stalk formed by the gamma and epsilon chains, while a peripheral stalk is formed by the delta and b chains.

The protein resides in the cell inner membrane. Key component of the proton channel; it plays a direct role in the translocation of protons across the membrane. The protein is ATP synthase subunit a of Afipia carboxidovorans (strain ATCC 49405 / DSM 1227 / KCTC 32145 / OM5) (Oligotropha carboxidovorans).